The sequence spans 580 residues: MSASSLLEQRPKGQGNKVQNGSVHQKDGLNDDDFEPYLSPQARPNNAYTAMSDSYLPSYYSPSIGFSYSLGEAAWSTGGDTAMPYLTSYGQLSNGEPHFLPDAMFGQPGALGSTPFLGQHGFNFFPSGIDFSAWGNNSSQGQSTQSSGYSSNYAYAPSSLGGAMIDGQSAFASETLNKAPGMNTIDQGMAALKLGSTEVASNVPKVVGSAVGSGSITSNIVASNSLPPATIAPPKPASWADIASKPAKQQPKLKTKNGIAGSSLPPPPIKHNMDIGTWDNKGPVAKAPSQALVQNIGQQPTQGSPQPVGQQANNSPPVAQASVGQQTQPLPPPPPQPAQLSVQQQAAQPTRWVAPRNRGSGFGHNGVDGNGVGQTQAGSGSTPSEPHPVLEKLRSINNYNPKDFDWNLKHGRVFIIKSYSEDDIHRSIKYNIWCSTEHGNKRLDAAYRSMNGKGPVYLLFSVNGSGHFCGVAEMKSAVDYNTCAGVWSQDKWKGRFDVRWIFVKDVPNSQLRHIRLENNENKPVTNSRDTQEVPLEKAKQVLKIIASYKHTTSIFDDFSHYEKRQEEEESVKKERQGRGK.

The tract at residues M1 to N45 is disordered. N-acetylserine is present on S2. S2, S4, S5, S22, S39, and S196 each carry phosphoserine. Residues S2–E385 form a localization to mRNA processing bodies (P-bodies) region. The disordered stretch occupies residues A247–P388. A compositionally biased stretch (polar residues) spans A291–P317. The span at A338–T350 shows a compositional bias: low complexity. S360 carries the post-translational modification Phosphoserine. Residues S360–V372 show a composition bias toward gly residues. Residues G373–S384 are compositionally biased toward polar residues. The segment at P386 to K580 is interaction with m6A-containing mRNAs. A Phosphoserine modification is found at S395. The YTH domain maps to G411–I545. RNA-binding positions include K417–Y419, D423, W433–C434, N463, W487, and W492.

The protein belongs to the YTHDF family. YTHDF2 subfamily. As to quaternary structure, interacts with CNOT1; interaction is direct and promotes recruitment of the CCR4-NOT complex. Interacts with YTHDF3. Interacts with RIDA/HRSP12; interaction leads to recruitment of the ribonuclease P/MRP complex. In terms of processing, ubiquitinated by the SCF(SKP2) complex, leading to its degradation.

The protein resides in the cytoplasm. The protein localises to the cytosol. It localises to the P-body. Its subcellular location is the stress granule. It is found in the nucleus. Functionally, specifically recognizes and binds N6-methyladenosine (m6A)-containing RNAs, and regulates their stability. M6A is a modification present at internal sites of mRNAs and some non-coding RNAs and plays a role in mRNA stability and processing. Acts as a regulator of mRNA stability by promoting degradation of m6A-containing mRNAs via interaction with the CCR4-NOT and ribonuclease P/MRP complexes, depending on the context. The YTHDF paralogs (YTHDF1, YTHDF2 and YTHDF3) share m6A-containing mRNAs targets and act redundantly to mediate mRNA degradation and cellular differentiation. M6A-containing mRNAs containing a binding site for RIDA/HRSP12 (5'-GGUUC-3') are preferentially degraded by endoribonucleolytic cleavage: cooperative binding of RIDA/HRSP12 and YTHDF2 to transcripts leads to recruitment of the ribonuclease P/MRP complex. Other m6A-containing mRNAs undergo deadenylation via direct interaction between YTHDF2 and CNOT1, leading to recruitment of the CCR4-NOT and subsequent deadenylation of m6A-containing mRNAs. Required maternally to regulate oocyte maturation: probably acts by binding to m6A-containing mRNAs, thereby regulating maternal transcript dosage during oocyte maturation, which is essential for the competence of oocytes to sustain early zygotic development. Also required during spermatogenesis: regulates spermagonial adhesion by promoting degradation of m6A-containing transcripts coding for matrix metallopeptidases. Also involved in hematopoietic stem cells specification by binding to m6A-containing mRNAs, leading to promote their degradation. Also acts as a regulator of neural development by promoting m6A-dependent degradation of neural development-related mRNA targets. Inhibits neural specification of induced pluripotent stem cells by binding to methylated neural-specific mRNAs and promoting their degradation, thereby restraining neural differentiation. Regulates circadian regulation of hepatic lipid metabolism: acts by promoting m6A-dependent degradation of PPARA transcripts. Regulates the innate immune response to infection by inhibiting the type I interferon response: acts by binding to m6A-containing IFNB transcripts and promoting their degradation. May also act as a promoter of cap-independent mRNA translation following heat shock stress: upon stress, relocalizes to the nucleus and specifically binds mRNAs with some m6A methylation mark at their 5'-UTR, protecting demethylation of mRNAs by FTO, thereby promoting cap-independent mRNA translation. Regulates mitotic entry by promoting the phase-specific m6A-dependent degradation of WEE1 transcripts. Promotes formation of phase-separated membraneless compartments, such as P-bodies or stress granules, by undergoing liquid-liquid phase separation upon binding to mRNAs containing multiple m6A-modified residues: polymethylated mRNAs act as a multivalent scaffold for the binding of YTHDF proteins, juxtaposing their disordered regions and thereby leading to phase separation. The resulting mRNA-YTHDF complexes then partition into different endogenous phase-separated membraneless compartments, such as P-bodies, stress granules or neuronal RNA granules. May also recognize and bind RNAs modified by C5-methylcytosine (m5C) and act as a regulator of rRNA processing. This chain is YTH domain-containing family protein 2, found in Bos taurus (Bovine).